The primary structure comprises 213 residues: 3,4-dihydroxy-2-butanone 4-phosphate synthase (213 aa).

D-ribulose 5-phosphate is bound by residues Arg-37–Glu-38, Asp-42, Arg-150–Thr-154, and Glu-174. Glu-38 is a Mg(2+) binding site. His-153 serves as a coordination point for Mg(2+).

The protein belongs to the DHBP synthase family. Homodimer. Mg(2+) serves as cofactor. Requires Mn(2+) as cofactor.

The catalysed reaction is D-ribulose 5-phosphate = (2S)-2-hydroxy-3-oxobutyl phosphate + formate + H(+). It participates in cofactor biosynthesis; riboflavin biosynthesis; 2-hydroxy-3-oxobutyl phosphate from D-ribulose 5-phosphate: step 1/1. Functionally, catalyzes the conversion of D-ribulose 5-phosphate to formate and 3,4-dihydroxy-2-butanone 4-phosphate. This is 3,4-dihydroxy-2-butanone 4-phosphate synthase from Clostridium botulinum (strain ATCC 19397 / Type A).